Here is a 282-residue protein sequence, read N- to C-terminus: NAD kinase (282 aa).

The active-site Proton acceptor is aspartate 67. NAD(+) is bound by residues aspartate 67–glycine 68, asparagine 140–glutamate 141, histidine 151, arginine 170, aspartate 172, and threonine 183–serine 188.

This sequence belongs to the NAD kinase family. Requires a divalent metal cation as cofactor.

It is found in the cytoplasm. The enzyme catalyses NAD(+) + ATP = ADP + NADP(+) + H(+). Functionally, involved in the regulation of the intracellular balance of NAD and NADP, and is a key enzyme in the biosynthesis of NADP. Catalyzes specifically the phosphorylation on 2'-hydroxyl of the adenosine moiety of NAD to yield NADP. The sequence is that of NAD kinase from Halobacterium salinarum (strain ATCC 700922 / JCM 11081 / NRC-1) (Halobacterium halobium).